The chain runs to 470 residues: Poly(A) polymerase catalytic subunit (470 aa).

Active-site residues include Asp192 and Asp194.

This sequence belongs to the poxviridae poly(A) polymerase catalytic subunit family. In terms of assembly, heterodimer of a large (catalytic) subunit and a small (regulatory) subunit.

The enzyme catalyses RNA(n) + ATP = RNA(n)-3'-adenine ribonucleotide + diphosphate. In terms of biological role, polymerase that creates the 3'-poly(A) tail of mRNA's. The protein is Poly(A) polymerase catalytic subunit (PAPL) of Odocoileus hemionus (Mule deer).